We begin with the raw amino-acid sequence, 638 residues long: Ubiquilin-2 (638 aa).

A compositionally biased stretch (low complexity) spans 1–26 (MAENGESSGPPRPSRGPAAAPGAASP). Disordered regions lie at residues 1–31 (MAENGESSGPPRPSRGPAAAPGAASPPAEPK) and 107–158 (RPQG…SSFG). Ala-2 carries the post-translational modification N-acetylalanine. At Ser-25 the chain carries Phosphoserine. A Ubiquitin-like domain is found at 33–107 (IKVTVKTPKE…VHLVIKSQNR (75 aa)). Positions 112–158 (ATTQPSTTAGTSTTTTTTTTAAAPAATTSSAPRSSSTPTTTNSSSFG) are enriched in low complexity. 2 STI1 domains span residues 189–217 (SPEMMIQIMENPFVQSMLSNPDLMRQLIM) and 219–258 (NPQMQQLIQRNPEISHLLNNPDIMRQTLEIARNPAMMQEM). Residues 298 to 364 (FGGNPFATVG…SGSSSSSTTA (67 aa)) are disordered. A compositionally biased stretch (low complexity) spans 305 to 316 (TVGSSSTSGEGT). Pro residues predominate over residues 327–336 (LPNPWAPPPT). Over residues 337–364 (TQTAATTTTTTTTSSGSGSGSSSSSTTA) the composition is skewed to low complexity. 2 STI1 domains span residues 393 to 440 (NPQL…QEQM) and 444 to 476 (LPNFLQQMQNPETIAAMSNPRAMQALMQIQQGL). Tandem repeats lie at residues 505 to 507 (PVG), 508 to 510 (PVT), 511 to 513 (PIG), 514 to 516 (PIG), 517 to 519 (PIV), 520 to 522 (PFT), 523 to 525 (PIG), 526 to 528 (PIG), 529 to 531 (PIG), 532 to 533 (PT), and 535 to 537 (PAS). The interval 505–537 (PVGPVTPIGPIGPIVPFTPIGPIGPIGPTGPAS) is 11 X 3 AA tandem repeats P-X-X. Residues 528–570 (GPIGPTGPASSPGSTGTGIPPATTVSSSAPTETISPTSESGPN) are disordered. Positions 533–551 (TGPASSPGSTGTGIPPATT) are enriched in low complexity. Over residues 552–570 (VSSSAPTETISPTSESGPN) the composition is skewed to polar residues. Residues 589-635 (PPNPEVRFQQQLEQLNAMGFLNREANLQALIATGGDINAAIERLLGS) form the UBA domain.

As to quaternary structure, homodimer. Forms heterodimer with UBQLN1. Binds UBE3A and BTRC. Interacts with the 19S proteasome subunit. Interacts with C9orf72. Binds CD47. Interacts with HNRNPA1 and HNRNPU. Found in a complex with UBQLN1 and MAP1LC3A/B/C. Interacts with EPS15, EPN1 and EPN2. Interacts with HERPUD1. Interacts with RAD23A. Interacts with TARDBP. Interacts (via C-terminus) with FAF2 (via N-terminus). Interacts with UBQLN4. Post-translationally, degraded during macroautophagy. In terms of tissue distribution, highly expressed in smooth muscle. Expression in other tissues is very low.

The protein localises to the cytoplasm. It localises to the nucleus. The protein resides in the membrane. Its subcellular location is the cytoplasmic vesicle. It is found in the autophagosome. In terms of biological role, plays an important role in the regulation of different protein degradation mechanisms and pathways including ubiquitin-proteasome system (UPS), autophagy and the endoplasmic reticulum-associated protein degradation (ERAD) pathway. Mediates the proteasomal targeting of misfolded or accumulated proteins for degradation by binding (via UBA domain) to their polyubiquitin chains and by interacting (via ubiquitin-like domain) with the subunits of the proteasome. Plays a role in the ERAD pathway via its interaction with ER-localized proteins FAF2/UBXD8 and HERPUD1 and may form a link between the polyubiquitinated ERAD substrates and the proteasome. Involved in the regulation of macroautophagy and autophagosome formation; required for maturation of autophagy-related protein LC3 from the cytosolic form LC3-I to the membrane-bound form LC3-II and may assist in the maturation of autophagosomes to autolysosomes by mediating autophagosome-lysosome fusion. Negatively regulates the endocytosis of GPCR receptors: AVPR2 and ADRB2, by specifically reducing the rate at which receptor-arrestin complexes concentrate in clathrin-coated pits (CCPs). Links CD47 to vimentin-containing intermediate filaments of the cytoskeleton. The polypeptide is Ubiquilin-2 (Ubqln2) (Mus musculus (Mouse)).